Here is a 101-residue protein sequence, read N- to C-terminus: Olivetolic acid cyclase (101 aa).

Positions 3–97 (VKHLIVLKFK…FWEKLLIFDY (95 aa)) constitute a Stress-response A/B barrel domain. Residue histidine 5 coordinates 3,5,7-trioxododecanoyl-CoA. Valine 31, isoleucine 34, and methionine 37 together coordinate Mg(2+). Residue tyrosine 72 coordinates 3,5,7-trioxododecanoyl-CoA. Residues tyrosine 72 and histidine 75 each act as acid/base catalyst in the active site.

Homodimer. As to expression, expressed in glandular trichomes and at lower levels in female flowers.

Its subcellular location is the cytoplasm. It catalyses the reaction 3,5,7-trioxododecanoyl-CoA = olivetolate + CoA + H(+). It functions in the pathway secondary metabolite biosynthesis; terpenoid biosynthesis. In terms of biological role, involved in the biosynthesis of cannabinoids-related terpenophenolic natural products, which have pharmacological activity. Polyketide cyclase which functions in concert with OLS/TKS to form olivetolic acid. Has no intrinsic polyketide synthase activity and requires the presence of OLS to produce olivetolic acid. This is Olivetolic acid cyclase from Cannabis sativa (Hemp).